The sequence spans 93 residues: Pyrimidine/purine nucleoside phosphorylase (93 aa).

Belongs to the nucleoside phosphorylase PpnP family.

It catalyses the reaction a purine D-ribonucleoside + phosphate = a purine nucleobase + alpha-D-ribose 1-phosphate. It carries out the reaction adenosine + phosphate = alpha-D-ribose 1-phosphate + adenine. The catalysed reaction is cytidine + phosphate = cytosine + alpha-D-ribose 1-phosphate. The enzyme catalyses guanosine + phosphate = alpha-D-ribose 1-phosphate + guanine. It catalyses the reaction inosine + phosphate = alpha-D-ribose 1-phosphate + hypoxanthine. It carries out the reaction thymidine + phosphate = 2-deoxy-alpha-D-ribose 1-phosphate + thymine. The catalysed reaction is uridine + phosphate = alpha-D-ribose 1-phosphate + uracil. The enzyme catalyses xanthosine + phosphate = alpha-D-ribose 1-phosphate + xanthine. Functionally, catalyzes the phosphorolysis of diverse nucleosides, yielding D-ribose 1-phosphate and the respective free bases. Can use uridine, adenosine, guanosine, cytidine, thymidine, inosine and xanthosine as substrates. Also catalyzes the reverse reactions. This Pseudomonas syringae pv. tomato (strain ATCC BAA-871 / DC3000) protein is Pyrimidine/purine nucleoside phosphorylase.